The sequence spans 113 residues: Probable 4-amino-4-deoxy-L-arabinose-phosphoundecaprenol flippase subunit ArnE (113 aa).

Transmembrane regions (helical) follow at residues 40–60, 64–84, and 92–112; these read FGWLMLAALLLGIGLLLWLLV, LPLGVAYPLLSINFVLVTLLA, and VDRHHWWGIALIVIGIYLMQG.

This sequence belongs to the ArnE family. In terms of assembly, heterodimer of ArnE and ArnF.

It localises to the cell inner membrane. It participates in bacterial outer membrane biogenesis; lipopolysaccharide biosynthesis. Functionally, translocates 4-amino-4-deoxy-L-arabinose-phosphoundecaprenol (alpha-L-Ara4N-phosphoundecaprenol) from the cytoplasmic to the periplasmic side of the inner membrane. The polypeptide is Probable 4-amino-4-deoxy-L-arabinose-phosphoundecaprenol flippase subunit ArnE (Pectobacterium atrosepticum (strain SCRI 1043 / ATCC BAA-672) (Erwinia carotovora subsp. atroseptica)).